An 80-amino-acid polypeptide reads, in one-letter code: Acyl carrier protein (80 aa).

Residues 4 to 79 enclose the Carrier domain; the sequence is QEIFEKVKAV…DAVEYIKAKL (76 aa). Residue Ser-39 is modified to O-(pantetheine 4'-phosphoryl)serine.

The protein belongs to the acyl carrier protein (ACP) family. 4'-phosphopantetheine is transferred from CoA to a specific serine of apo-ACP by AcpS. This modification is essential for activity because fatty acids are bound in thioester linkage to the sulfhydryl of the prosthetic group.

It localises to the cytoplasm. The protein operates within lipid metabolism; fatty acid biosynthesis. In terms of biological role, carrier of the growing fatty acid chain in fatty acid biosynthesis. This is Acyl carrier protein from Thermus thermophilus (strain ATCC BAA-163 / DSM 7039 / HB27).